The sequence spans 355 residues: Peptide chain release factor 1 (355 aa).

Gln233 is modified (N5-methylglutamine). Basic and acidic residues predominate over residues 282–293 (RKKEQARADSRR). Residues 282-305 (RKKEQARADSRRGQVGSGDRSERI) are disordered.

It belongs to the prokaryotic/mitochondrial release factor family. Methylated by PrmC. Methylation increases the termination efficiency of RF1.

It is found in the cytoplasm. Functionally, peptide chain release factor 1 directs the termination of translation in response to the peptide chain termination codons UAG and UAA. The chain is Peptide chain release factor 1 from Rickettsia rickettsii (strain Iowa).